The primary structure comprises 482 residues: Argininosuccinate synthase (482 aa).

ATP contacts are provided by residues 17 to 25 (AFSGGLDTS) and alanine 43. An L-citrulline-binding site is contributed by tyrosine 99. 2 residues coordinate ATP: glycine 129 and threonine 131. Threonine 131, asparagine 135, and aspartate 136 together coordinate L-aspartate. Position 135 (asparagine 135) interacts with L-citrulline. Aspartate 136 is a binding site for ATP. L-citrulline is bound by residues arginine 139 and serine 192. Aspartate 194 contributes to the ATP binding site. L-citrulline contacts are provided by threonine 201, glutamate 203, and glutamate 280. The disordered stretch occupies residues 461-482 (SRGEATDEETMLDRAAMESGTD).

It belongs to the argininosuccinate synthase family. Type 2 subfamily. Homotetramer.

The protein resides in the cytoplasm. The enzyme catalyses L-citrulline + L-aspartate + ATP = 2-(N(omega)-L-arginino)succinate + AMP + diphosphate + H(+). Its pathway is amino-acid biosynthesis; L-arginine biosynthesis; L-arginine from L-ornithine and carbamoyl phosphate: step 2/3. The protein is Argininosuccinate synthase (argG) of Streptomyces lavendulae.